Here is a 276-residue protein sequence, read N- to C-terminus: Undecaprenyl-diphosphatase (276 aa).

The next 6 membrane-spanning stretches (helical) occupy residues 43–63 (RAMA…VWEF), 85–105 (INLL…ADLI), 109–129 (LFNP…MLWA), 184–204 (ATEF…VYSG), 218–238 (VFAI…KGLL), and 254–274 (IAFG…WTAA).

The protein belongs to the UppP family.

It localises to the cell inner membrane. It catalyses the reaction di-trans,octa-cis-undecaprenyl diphosphate + H2O = di-trans,octa-cis-undecaprenyl phosphate + phosphate + H(+). In terms of biological role, catalyzes the dephosphorylation of undecaprenyl diphosphate (UPP). Confers resistance to bacitracin. In Pseudomonas fluorescens (strain ATCC BAA-477 / NRRL B-23932 / Pf-5), this protein is Undecaprenyl-diphosphatase.